A 72-amino-acid polypeptide reads, in one-letter code: Conotoxin VnMKLT2-021 (72 aa).

Residues 1–22 (MKLTCVLIVAVLFLTACQLTTA) form the signal peptide. Positions 23–45 (ASYARSERQHPDLGSSDQNSKLT) are excised as a propeptide. 3 cysteine pairs are disulfide-bonded: Cys-48–Cys-62, Cys-55–Cys-66, and Cys-61–Cys-71.

It belongs to the conotoxin O1 superfamily. As to expression, expressed by the venom duct.

It is found in the secreted. This chain is Conotoxin VnMKLT2-021, found in Conus ventricosus (Mediterranean cone).